Consider the following 440-residue polypeptide: Thymidine phosphorylase (440 aa).

Belongs to the thymidine/pyrimidine-nucleoside phosphorylase family. Homodimer.

The enzyme catalyses thymidine + phosphate = 2-deoxy-alpha-D-ribose 1-phosphate + thymine. It participates in pyrimidine metabolism; dTMP biosynthesis via salvage pathway; dTMP from thymine: step 1/2. Its function is as follows. The enzymes which catalyze the reversible phosphorolysis of pyrimidine nucleosides are involved in the degradation of these compounds and in their utilization as carbon and energy sources, or in the rescue of pyrimidine bases for nucleotide synthesis. In Proteus mirabilis (strain HI4320), this protein is Thymidine phosphorylase.